Here is an 82-residue protein sequence, read N- to C-terminus: MNTEKLKDIKARIKDFKSYKTSNSKIQQKINPFSIALDLVSGTMVGLLIGILTDKFFNSKPLFLIIFTIIGMIAGFNIIRRK.

Transmembrane regions (helical) follow at residues 32 to 52 (PFSI…IGIL) and 59 to 79 (SKPL…FNII).

It is found in the cell membrane. This is an uncharacterized protein from Rickettsia prowazekii (strain Madrid E).